We begin with the raw amino-acid sequence, 66 residues long: Large ribosomal subunit protein bL35 (66 aa).

Belongs to the bacterial ribosomal protein bL35 family.

The chain is Large ribosomal subunit protein bL35 from Ruegeria sp. (strain TM1040) (Silicibacter sp.).